Here is a 400-residue protein sequence, read N- to C-terminus: Forkhead box protein Q1 (400 aa).

The disordered stretch occupies residues 1-112 (MKLEVFVPRA…EGARSKPYTR (112 aa)). A compositionally biased stretch (low complexity) spans 32 to 54 (LSAAGDDSLGSDGDCAANSPAAG). Gly residues-rich tracts occupy residues 55 to 66 (SGAGDLEGGGGE) and 95 to 104 (CAGGVGGGEG). Residues 115–210 (KPPYSYIALI…ADGVFRRRRK (96 aa)) constitute a DNA-binding region (fork-head). The interval 213–264 (SHRTTVSASGLRPEEAPPGPAGTPQPAPAARSSPIARSPARQEERSSPASKF) is disordered. Positions 228-239 (APPGPAGTPQPA) are enriched in pro residues. The span at 240–251 (PAARSSPIARSP) shows a compositional bias: low complexity.

As to expression, expressed in kidney and stomach. Expression in the outer medulla of the kidney and the transitional epithelium. Expressed in the hair follicle medulla.

The protein resides in the nucleus. Plays a role in hair follicle differentiation. The chain is Forkhead box protein Q1 (Foxq1) from Mus musculus (Mouse).